The chain runs to 309 residues: Prepilin leader peptidase/N-methyltransferase (309 aa).

Residues 35–55 form a helical membrane-spanning segment; it reads MQLAFAIVLGLVVGSFLNVVV. Cys96, Cys99, Cys121, and Cys124 together coordinate Zn(2+). 6 helical membrane passes run 147–167, 183–203, 207–227, 230–250, 253–273, and 288–308; these read LALF…AALL, LTLP…FASL, VIGA…FKLL, IEGI…WLGW, LPQV…VATW, and FLAA…LLLG.

This sequence belongs to the peptidase A24 family. Zn(2+) is required as a cofactor.

It localises to the cell inner membrane. It carries out the reaction Typically cleaves a -Gly-|-Phe- bond to release an N-terminal, basic peptide of 5-8 residues from type IV prepilin, and then N-methylates the new N-terminal amino group, the methyl donor being S-adenosyl-L-methionine.. In terms of biological role, plays an essential role in type IV pili and type II pseudopili formation by proteolytically removing the leader sequence from substrate proteins and subsequently monomethylating the alpha-amino group of the newly exposed N-terminal phenylalanine. The chain is Prepilin leader peptidase/N-methyltransferase (gspO) from Burkholderia pseudomallei (strain 1026b).